Consider the following 347-residue polypeptide: 3-isopropylmalate dehydrogenase (347 aa).

Residues arginine 94, arginine 104, arginine 128, and aspartate 219 each contribute to the substrate site. 3 residues coordinate Mg(2+): aspartate 219, aspartate 243, and aspartate 247. 279–291 is a binding site for NAD(+); sequence GSAPDIAGQGKAD.

This sequence belongs to the isocitrate and isopropylmalate dehydrogenases family. LeuB type 2 subfamily. In terms of assembly, homodimer. Mg(2+) serves as cofactor. Mn(2+) is required as a cofactor.

The protein localises to the cytoplasm. It catalyses the reaction (2R,3S)-3-isopropylmalate + NAD(+) = 4-methyl-2-oxopentanoate + CO2 + NADH. It functions in the pathway amino-acid biosynthesis; L-leucine biosynthesis; L-leucine from 3-methyl-2-oxobutanoate: step 3/4. Its function is as follows. Catalyzes the oxidation of 3-carboxy-2-hydroxy-4-methylpentanoate (3-isopropylmalate) to 3-carboxy-4-methyl-2-oxopentanoate. The product decarboxylates to 4-methyl-2 oxopentanoate. The polypeptide is 3-isopropylmalate dehydrogenase (Streptomyces griseus subsp. griseus (strain JCM 4626 / CBS 651.72 / NBRC 13350 / KCC S-0626 / ISP 5235)).